Reading from the N-terminus, the 303-residue chain is Nod factor export ATP-binding protein I (303 aa).

Positions 5–235 (LQMRNVRKLY…EIGCDVVEVY (231 aa)) constitute an ABC transporter domain. 37–44 (GPNGAGKT) provides a ligand contact to ATP.

Belongs to the ABC transporter superfamily. Lipooligosaccharide exporter (TC 3.A.1.102) family. The complex is composed of two ATP-binding proteins (NodI) and two transmembrane proteins (NodJ).

The protein resides in the cell inner membrane. Functionally, part of the ABC transporter complex NodIJ involved in the export of the nodulation factors (Nod factors), the bacterial signal molecules that induce symbiosis and subsequent nodulation induction. Nod factors are LCO (lipo-chitin oligosaccharide), a modified beta-1,4-linked N-acetylglucosamine oligosaccharide. This subunit is responsible for energy coupling to the transport system. The protein is Nod factor export ATP-binding protein I of Cupriavidus metallidurans (strain ATCC 43123 / DSM 2839 / NBRC 102507 / CH34) (Ralstonia metallidurans).